Consider the following 229-residue polypeptide: UPF0758 protein Fjoh_0413 (229 aa).

The MPN domain maps to 107–229 (KITSSKDAFT…YYSFVDEGIF (123 aa)). Zn(2+)-binding residues include H178, H180, and D191. Positions 178–191 (HNHPSGELNPSQAD) match the JAMM motif motif.

Belongs to the UPF0758 family.

The protein is UPF0758 protein Fjoh_0413 of Flavobacterium johnsoniae (strain ATCC 17061 / DSM 2064 / JCM 8514 / BCRC 14874 / CCUG 350202 / NBRC 14942 / NCIMB 11054 / UW101) (Cytophaga johnsonae).